The chain runs to 117 residues: Large ribosomal subunit protein uL24 (117 aa).

Basic residues predominate over residues 1 to 10 (MSKQPRKQRK). The tract at residues 1–28 (MSKQPRKQRKALYTAPLHKRHNSMSVHL) is disordered.

Belongs to the universal ribosomal protein uL24 family. Part of the 50S ribosomal subunit.

In terms of biological role, one of two assembly initiator proteins, it binds directly to the 5'-end of the 23S rRNA, where it nucleates assembly of the 50S subunit. Functionally, located at the polypeptide exit tunnel on the outside of the subunit. This is Large ribosomal subunit protein uL24 from Methanosphaera stadtmanae (strain ATCC 43021 / DSM 3091 / JCM 11832 / MCB-3).